The chain runs to 204 residues: Ribosome maturation factor RimP (204 aa).

The disordered stretch occupies residues 177-204 (NFDESQFDEIQETEGEEADEAETPITRH). A compositionally biased stretch (acidic residues) spans 181-198 (SQFDEIQETEGEEADEAE).

This sequence belongs to the RimP family.

Its subcellular location is the cytoplasm. Functionally, required for maturation of 30S ribosomal subunits. This chain is Ribosome maturation factor RimP, found in Cereibacter sphaeroides (strain ATCC 17025 / ATH 2.4.3) (Rhodobacter sphaeroides).